A 303-amino-acid polypeptide reads, in one-letter code: Cell division protein ZipA (303 aa).

The Periplasmic portion of the chain corresponds to 1 to 6 (MMQDLR). Residues 7 to 27 (LILIIVGAIAIIALLLHGLWT) form a helical membrane-spanning segment. Residues 28 to 303 (SRKERSSLFR…RIRSTLGVQV (276 aa)) are Cytoplasmic-facing. Disordered stretches follow at residues 39–61 (RPVK…DEAF), 66–85 (KPYA…EPAI), and 124–159 (EQEP…GEKE). Composition is skewed to basic and acidic residues over residues 75 to 85 (SHQEYKAEPAI) and 139 to 159 (ESER…GEKE).

The protein belongs to the ZipA family. As to quaternary structure, interacts with FtsZ via their C-terminal domains.

Its subcellular location is the cell inner membrane. Essential cell division protein that stabilizes the FtsZ protofilaments by cross-linking them and that serves as a cytoplasmic membrane anchor for the Z ring. Also required for the recruitment to the septal ring of downstream cell division proteins. The protein is Cell division protein ZipA of Photorhabdus laumondii subsp. laumondii (strain DSM 15139 / CIP 105565 / TT01) (Photorhabdus luminescens subsp. laumondii).